We begin with the raw amino-acid sequence, 547 residues long: Inactive delta-guaiene synthase (547 aa).

Residues aspartate 299, aspartate 303, and aspartate 444 each contribute to the Mg(2+) site. Positions 299–303 match the DDXXD motif motif; that stretch reads DDTYD.

Belongs to the terpene synthase family. The cofactor is Mg(2+).

This is Inactive delta-guaiene synthase (C1) from Aquilaria crassna (Eagle wood).